The chain runs to 1311 residues: Protein PARALOG OF AIPP2 (1311 aa).

3 disordered regions span residues 1–21, 114–141, and 178–280; these read MADRRVGKRQMGQRGFSKVES, ISDDSGAAAMTSKPSLSGSRMKHKVSAS, and GNKD…EMVE. A compositionally biased stretch (basic and acidic residues) spans 213–240; that stretch reads NHDDRVSSEKGNFKEKSRPGGNKERQEP. Over residues 258-270 the composition is skewed to low complexity; the sequence is SKSSSSNSSAVSE. The PHD-type zinc-finger motif lies at 283–334; that stretch reads VKVCDICGDAGREDLLAICSGCSDGAEHTYCMREMLDEVPEGDWLCEECAEE. Positions 286, 289, 301, 304, 310, 313, 328, and 331 each coordinate Zn(2+). The stretch at 328–348 forms a coiled coil; it reads CEECAEEAEKQKQEAKRKRET. 8 disordered regions span residues 369–390, 411–440, 460–701, 975–1050, 1059–1078, 1087–1138, 1152–1186, and 1249–1311; these read PDAKRQVVEASTGSPKKSILPR, NHQTSFSDDTESARSAGSQLQPPKGAFLKS, HPRQ…EDLN, TNPQ…PSKK, EAGVNHIPPQVTGSNSGDSL, EQEL…NPAN, NDGLCEGSPNKKLKTENGSSSLCRDTSGHDSGIMK, and LSRS…DLPR. Residues 411-431 are compositionally biased toward polar residues; it reads NHQTSFSDDTESARSAGSQLQ. Residues 460-472 are compositionally biased toward basic and acidic residues; sequence HPRQKTGKEDTAL. Residues 487 to 502 show a composition bias toward polar residues; that stretch reads PSRTTDAGNSGGSDSQ. Positions 512–528 are enriched in basic and acidic residues; that stretch reads HSQEGKSLKQVKDRNRE. The segment covering 529 to 552 has biased composition (polar residues); that stretch reads ANASASSIDQKLKSRGNSSVSHAN. Positions 553 to 566 are enriched in basic and acidic residues; that stretch reads NNRDLKGLQSDGKR. Residues 569–607 are compositionally biased toward polar residues; the sequence is LTKQVSNLSRNRLENSVVSGGDISTNEKCSASEQSSSQA. The segment covering 640–653 has biased composition (basic and acidic residues); sequence VPREVGKKSKEAFS. 3 stretches are compositionally biased toward polar residues: residues 668 to 694, 977 to 988, and 1014 to 1025; these read PSSQKGGQTAESSDTSGVSDSDLSTTK, PQKNTSLPTSNV, and LRESSSNGIETR. Residues 1026 to 1050 show a composition bias toward basic and acidic residues; it reads NGTDARSHENPNNRESSIERSPSKK. The segment covering 1087 to 1096 has biased composition (basic and acidic residues); sequence EQELGGRKDL. Residues 1250–1263 show a composition bias toward polar residues; it reads SRSSNSGEQSNNSM. Residues 1256–1276 are a coiled coil; that stretch reads GEQSNNSMNKEKQKADEEEED. A compositionally biased stretch (low complexity) spans 1280–1289; sequence VAASLSLSLS.

As to quaternary structure, part of the BAH-PHD bivalent histone reader complex that contains AIPP2, PAIPP2 and AIPP3/BDT1; the BAH-PHD module associates with CPL2 to form the BAH-PHD-CPL2 complex (BPC) for transcriptional repression. Binds directly to AIPP3/BDT1 and CPL2, but not to AIPP2. Expressed ubiquitously.

In terms of biological role, together with AIPP2 and AIPP3/BDT1, cooperates to form a BAH-PHD bivalent histone reader complex able to read histone H3 lysine 27 trimethylation (H3K27me3) and low-methylated H3K4 histone marks in order to regulate transcription, especially to prevent early flowering; promotes AIPP3/BDT1 binding to H3K27me3. CPL2 is subsequently recruited to form a BAH-PHD-CPL2 complex (BPC) in order to silence several H3K27me3 and low-methylated H3K4 enriched loci, including AGO5, via the phosphorylation state-dependent inhibition of Pol II release from the transcriptional start site (e.g. Ser5P-Pol II dephosphorylation). The BPC complex represses flowering by inhibiting the expression of several genes, including AGL6, FT, FUL and SOC1. The sequence is that of Protein PARALOG OF AIPP2 from Arabidopsis thaliana (Mouse-ear cress).